The following is a 414-amino-acid chain: MNCFSCFYFHEKKKVPRDSDNSYRRNGEVTGRDNNKTHPENPKTVNEQNKNNDEDKEVTNNIAAQTFSFRELATATKNFRQECLIGEGGFGRVYKGKLEKTGMIVAVKQLDRNGLQGNKEFIVEVLMLSLLHHKHLVNLIGYCADGDQRLLVYEYMSRGSLEDHLLDLTPDQIPLDWDTRIRIALGAAMGLEYLHDKANPPVIYRDLKAANILLDGEFNAKLSDFGLAKLGPVGDKQHVSSRVMGTYGYCAPEYQRTGQLTTKSDVYSFGVVLLELITGRRVIDTTRPKDEQNLVTWAQPVFKEPSRFPELADPSLEGVFPEKALNQAVAVAAMCLQEEATVRPLMSDVVTALGFLGTAPDGSISVPHYDDPPQPSDETSVEDSVAAEERERAVAEAMEWGVASRAHSRNPSAS.

A lipid anchor (S-palmitoyl cysteine) is attached at Cys-3. Over residues 17-41 (RDSDNSYRRNGEVTGRDNNKTHPEN) the composition is skewed to basic and acidic residues. Residues 17 to 55 (RDSDNSYRRNGEVTGRDNNKTHPENPKTVNEQNKNNDED) are disordered. The Protein kinase domain occupies 79–356 (FRQECLIGEG…SDVVTALGFL (278 aa)). Residues 85–93 (IGEGGFGRV) and Lys-108 each bind ATP. Tyr-153 is modified (phosphotyrosine). Residue Asp-206 is the Proton acceptor of the active site. The residue at position 240 (Ser-240) is a Phosphoserine. The residue at position 246 (Thr-246) is a Phosphothreonine. The residue at position 254 (Tyr-254) is a Phosphotyrosine. A disordered region spans residues 364–394 (ISVPHYDDPPQPSDETSVEDSVAAEERERAV).

This sequence belongs to the protein kinase superfamily. Ser/Thr protein kinase family. Palmitoylation at Cys-3 and Cys-6 are required for plasma membrane location.

The protein localises to the cell membrane. It carries out the reaction L-seryl-[protein] + ATP = O-phospho-L-seryl-[protein] + ADP + H(+). The catalysed reaction is L-threonyl-[protein] + ATP = O-phospho-L-threonyl-[protein] + ADP + H(+). In terms of biological role, may be involved in plant defense signaling. This chain is Probable serine/threonine-protein kinase PBL26, found in Arabidopsis thaliana (Mouse-ear cress).